A 394-amino-acid chain; its full sequence is UPF0229 protein RBAM_009260 (394 aa).

Belongs to the UPF0229 family.

The protein is UPF0229 protein RBAM_009260 of Bacillus velezensis (strain DSM 23117 / BGSC 10A6 / LMG 26770 / FZB42) (Bacillus amyloliquefaciens subsp. plantarum).